The primary structure comprises 590 residues: CTP synthase (590 aa).

Positions 1–281 (MPALRKHPQT…DAYVVRRLNL (281 aa)) are amidoligase domain. Residue S23 participates in CTP binding. S23 lines the UTP pocket. ATP contacts are provided by residues 24–29 (SLGKGL) and D81. Residues D81 and E155 each contribute to the Mg(2+) site. Residues 162-164 (DIE), 202-207 (KTKPTQ), and K238 contribute to the CTP site. UTP contacts are provided by residues 202–207 (KTKPTQ) and K238. Positions 306–554 (RIALVGKYID…IGAAIDYKAA (249 aa)) constitute a Glutamine amidotransferase type-1 domain. L-glutamine is bound at residue G369. C396 acts as the Nucleophile; for glutamine hydrolysis in catalysis. L-glutamine is bound by residues 397–400 (LGLQ), E419, and R480. Catalysis depends on residues H527 and E529.

The protein belongs to the CTP synthase family. As to quaternary structure, homotetramer.

The enzyme catalyses UTP + L-glutamine + ATP + H2O = CTP + L-glutamate + ADP + phosphate + 2 H(+). It catalyses the reaction L-glutamine + H2O = L-glutamate + NH4(+). The catalysed reaction is UTP + NH4(+) + ATP = CTP + ADP + phosphate + 2 H(+). It participates in pyrimidine metabolism; CTP biosynthesis via de novo pathway; CTP from UDP: step 2/2. With respect to regulation, allosterically activated by GTP, when glutamine is the substrate; GTP has no effect on the reaction when ammonia is the substrate. The allosteric effector GTP functions by stabilizing the protein conformation that binds the tetrahedral intermediate(s) formed during glutamine hydrolysis. Inhibited by the product CTP, via allosteric rather than competitive inhibition. Catalyzes the ATP-dependent amination of UTP to CTP with either L-glutamine or ammonia as the source of nitrogen. Regulates intracellular CTP levels through interactions with the four ribonucleotide triphosphates. The chain is CTP synthase from Mycolicibacterium smegmatis (strain ATCC 700084 / mc(2)155) (Mycobacterium smegmatis).